A 378-amino-acid polypeptide reads, in one-letter code: uncharacterized protein (378 aa).

Transmembrane regions (helical) follow at residues 7–29 (VTPF…RLSQ), 33–55 (LFFV…YQII), 68–85 (VSYL…EFYT), 90–108 (SGSL…HLLL), 115–137 (PLTV…FLYL), 152–174 (LTVG…MLIM), 204–225 (NYKL…FLYL), 245–267 (IFLF…ASHA), 280–302 (LILY…PRIV), and 347–366 (FSPL…ALFL).

Its subcellular location is the cell membrane. This is an uncharacterized protein from Aquifex aeolicus (strain VF5).